The following is a 669-amino-acid chain: DNA ligase (669 aa).

NAD(+) is bound by residues Asp-34–Asp-38, Ser-83–Leu-84, and Glu-117. Residue Lys-119 is the N6-AMP-lysine intermediate of the active site. Positions 140, 177, 293, and 317 each coordinate NAD(+). The Zn(2+) site is built by Cys-411, Cys-414, Cys-429, and Cys-434. Positions Arg-591–Gly-669 constitute a BRCT domain.

Belongs to the NAD-dependent DNA ligase family. LigA subfamily. Mg(2+) serves as cofactor. The cofactor is Mn(2+).

The enzyme catalyses NAD(+) + (deoxyribonucleotide)n-3'-hydroxyl + 5'-phospho-(deoxyribonucleotide)m = (deoxyribonucleotide)n+m + AMP + beta-nicotinamide D-nucleotide.. In terms of biological role, DNA ligase that catalyzes the formation of phosphodiester linkages between 5'-phosphoryl and 3'-hydroxyl groups in double-stranded DNA using NAD as a coenzyme and as the energy source for the reaction. It is essential for DNA replication and repair of damaged DNA. In Geotalea daltonii (strain DSM 22248 / JCM 15807 / FRC-32) (Geobacter daltonii), this protein is DNA ligase.